Here is a 156-residue protein sequence, read N- to C-terminus: Small ribosomal subunit protein uS7c (156 aa).

It belongs to the universal ribosomal protein uS7 family. As to quaternary structure, part of the 30S ribosomal subunit.

Its subcellular location is the plastid. The protein resides in the chloroplast. In terms of biological role, one of the primary rRNA binding proteins, it binds directly to 16S rRNA where it nucleates assembly of the head domain of the 30S subunit. The sequence is that of Small ribosomal subunit protein uS7c (rps7) from Zamia furfuracea (Cardboard cycad).